A 70-amino-acid chain; its full sequence is DNA-directed RNA polymerase subunit epsilon (70 aa).

It belongs to the RNA polymerase subunit epsilon family. In terms of assembly, RNAP is composed of a core of 2 alpha, a beta and a beta' subunit. The core is associated with a delta subunit, and at least one of epsilon or omega. When a sigma factor is associated with the core the holoenzyme is formed, which can initiate transcription.

It catalyses the reaction RNA(n) + a ribonucleoside 5'-triphosphate = RNA(n+1) + diphosphate. In terms of biological role, a non-essential component of RNA polymerase (RNAP). This Leuconostoc mesenteroides subsp. mesenteroides (strain ATCC 8293 / DSM 20343 / BCRC 11652 / CCM 1803 / JCM 6124 / NCDO 523 / NBRC 100496 / NCIMB 8023 / NCTC 12954 / NRRL B-1118 / 37Y) protein is DNA-directed RNA polymerase subunit epsilon.